Here is a 1019-residue protein sequence, read N- to C-terminus: UPF0182 protein Tery_0938 (1019 aa).

A run of 9 helical transmembrane segments spans residues 23–43 (IHIL…GFST), 67–87 (TETW…LVNL), 128–148 (LSLS…GLIL), 192–212 (LWLL…PILW), 213–233 (LSVF…SHWA), 270–290 (FWLI…YLLS), 313–333 (LGGG…FELL), 355–375 (YVFL…QAIF), and 416–436 (AILT…PKIV).

The protein belongs to the UPF0182 family.

The protein resides in the cell membrane. In Trichodesmium erythraeum (strain IMS101), this protein is UPF0182 protein Tery_0938.